An 810-amino-acid chain; its full sequence is Glycerol-3-phosphate acyltransferase (810 aa).

An HXXXXD motif motif is present at residues 305–310 (CHRSHI).

It belongs to the GPAT/DAPAT family.

The protein localises to the cell inner membrane. It carries out the reaction sn-glycerol 3-phosphate + an acyl-CoA = a 1-acyl-sn-glycero-3-phosphate + CoA. The protein operates within phospholipid metabolism; CDP-diacylglycerol biosynthesis; CDP-diacylglycerol from sn-glycerol 3-phosphate: step 1/3. This chain is Glycerol-3-phosphate acyltransferase, found in Haemophilus influenzae (strain 86-028NP).